Consider the following 105-residue polypeptide: Thioredoxin (105 aa).

A Thioredoxin domain is found at 2–105 (VKQIDSKDAF…KLEATINEFV (104 aa)). Lys3 bears the N6-acetyllysine mark. Lys8 carries the N6-succinyllysine modification. Active-site nucleophile residues include Cys32 and Cys35. Cys32 and Cys35 are oxidised to a cystine. An N6-acetyllysine modification is found at Lys39. An S-nitrosocysteine mark is found at Cys62 and Cys69. S-nitrosocysteine; alternate is present on Cys73. At Lys94 the chain carries N6-acetyllysine; alternate. Lys94 is subject to N6-succinyllysine; alternate.

This sequence belongs to the thioredoxin family. As to quaternary structure, homodimer; disulfide-linked. Interacts with TXNIP through the redox-active site. Interacts with MAP3K5 and CASP3. Interacts with APEX1; the interaction stimulates the FOS/JUN AP-1 DNA-binding activity in a redox-dependent manner. In the fully reduced protein, both Cys-69 and Cys-73 are nitrosylated in response to nitric oxide (NO). When two disulfide bonds are present in the protein, only Cys-73 is nitrosylated. Cys-73 can serve as donor for nitrosylation of target proteins.

The protein localises to the nucleus. It is found in the cytoplasm. It localises to the secreted. Functionally, participates in various redox reactions through the reversible oxidation of its active center dithiol to a disulfide and catalyzes dithiol-disulfide exchange reactions. Plays a role in the reversible S-nitrosylation of cysteine residues in target proteins, and thereby contributes to the response to intracellular nitric oxide. Nitrosylates the active site Cys of CASP3 in response to nitric oxide (NO), and thereby inhibits caspase-3 activity. Induces the FOS/JUN AP-1 DNA binding activity in ionizing radiation (IR) cells through its oxidation/reduction status and stimulates AP-1 transcriptional activity. In Callithrix jacchus (White-tufted-ear marmoset), this protein is Thioredoxin (TXN).